A 364-amino-acid chain; its full sequence is Lipid-A-disaccharide synthase (364 aa).

This sequence belongs to the LpxB family.

It carries out the reaction a lipid X + a UDP-2-N,3-O-bis[(3R)-3-hydroxyacyl]-alpha-D-glucosamine = a lipid A disaccharide + UDP + H(+). The protein operates within bacterial outer membrane biogenesis; LPS lipid A biosynthesis. Its function is as follows. Condensation of UDP-2,3-diacylglucosamine and 2,3-diacylglucosamine-1-phosphate to form lipid A disaccharide, a precursor of lipid A, a phosphorylated glycolipid that anchors the lipopolysaccharide to the outer membrane of the cell. This is Lipid-A-disaccharide synthase from Campylobacter jejuni (strain RM1221).